Here is a 973-residue protein sequence, read N- to C-terminus: ATP-dependent DNA helicase Q5 (973 aa).

The Helicase ATP-binding domain maps to 39–213 (MAVVKGDKDV…FAALHLKQPV (175 aa)). 52–59 (MPTGAGKS) serves as a coordination point for ATP. Positions 157 to 160 (DEAH) match the DEAH box motif. The Helicase C-terminal domain occupies 241-398 (NLRDFCLKAL…NKPSDKATLL (158 aa)). Zn(2+) contacts are provided by Cys-412, Cys-428, Cys-432, and Cys-435. A phosphoserine mark is found at Ser-489 and Ser-492. Positions 491–621 (GSGDEGRDEA…ASKDGQLYDM (131 aa)) are interaction with POLR2A. Disordered stretches follow at residues 518-538 (GKEAKPEEFTPPGEDCPLRDA), 679-795 (TEKL…VPGK), and 822-884 (CSLE…AREP). Thr-527 carries the phosphothreonine modification. Residues 653–726 (PKRVGAGFSK…APGSRTNCGD (74 aa)) are interaction with RAD51. At Ser-728 the chain carries Phosphoserine; by CDK1. A compositionally biased stretch (basic and acidic residues) spans 840–856 (TQAEKRPRPQQESQEKR). Positions 863-878 (PSTNSSALASDPSTEN) are enriched in polar residues.

Belongs to the helicase family. RecQ subfamily. As to quaternary structure, monomer. Interacts with TOP2A, TOP3A and TOP3B. Interacts with RNA polymerase II subunit POLR2A. Identified in a complex with the RNA polymerase II core bound to DNA. Interacts with RAD51. Interacts with WRN; this interaction stimulates WRN helicase activity on DNA fork duplexes. Interacts with MUS1; this interaction promotes MUS81-dependent mitotic DNA synthesis. Requires Zn(2+) as cofactor. In terms of processing, phosphorylated by CDK1 at Ser-728; this phosphorylation is required for RECQL5-mediated disruption of RAD51 filaments on stalled replication forks.

The protein resides in the nucleus. Its subcellular location is the nucleoplasm. It catalyses the reaction Couples ATP hydrolysis with the unwinding of duplex DNA by translocating in the 3'-5' direction.. The catalysed reaction is ATP + H2O = ADP + phosphate + H(+). Its function is as follows. DNA helicase that plays an important role in DNA replication, transcription and repair. Binds to the RNA polymerase II subunit POLR2A during transcription elongation and suppresses transcription-associated genomic instability. Also associates with POLR1A and enforces the stability of ribosomal DNA arrays. Plays an important role in mitotic chromosome separation after cross-over events and cell cycle progress. Mechanistically, removes RAD51 filaments protecting stalled replication forks at common fragile sites and stimulates MUS81-EME1 endonuclease leading to mitotic DNA synthesis. Required for efficient DNA repair, including repair of inter-strand cross-links. Stimulates DNA decatenation mediated by TOP2A. Prevents sister chromatid exchange and homologous recombination. This chain is ATP-dependent DNA helicase Q5 (Recql5), found in Rattus norvegicus (Rat).